Reading from the N-terminus, the 258-residue chain is Hydroxyacylglutathione hydrolase (258 aa).

Histidine 56, histidine 58, aspartate 60, histidine 61, histidine 112, aspartate 132, and histidine 170 together coordinate Zn(2+).

The protein belongs to the metallo-beta-lactamase superfamily. Glyoxalase II family. Monomer. The cofactor is Zn(2+).

The enzyme catalyses an S-(2-hydroxyacyl)glutathione + H2O = a 2-hydroxy carboxylate + glutathione + H(+). It participates in secondary metabolite metabolism; methylglyoxal degradation; (R)-lactate from methylglyoxal: step 2/2. Functionally, thiolesterase that catalyzes the hydrolysis of S-D-lactoyl-glutathione to form glutathione and D-lactic acid. The polypeptide is Hydroxyacylglutathione hydrolase (Pseudomonas paraeruginosa (strain DSM 24068 / PA7) (Pseudomonas aeruginosa (strain PA7))).